The following is a 1158-amino-acid chain: Phospholipid-transporting ATPase 1 (1158 aa).

Positions 1–15 (MDPRKSIDKPPHHDP) are enriched in basic and acidic residues. Positions 1-30 (MDPRKSIDKPPHHDPILGVSSRWSVSSKDN) are disordered. Residues 1-100 (MDPRKSIDKP…TAKYSVFTFL (100 aa)) are Cytoplasmic-facing. Residues 101 to 122 (PRNLFEQFHRVAYIYFLVIAVL) form a helical membrane-spanning segment. Over 123–127 (NQLPQ) the chain is Extracellular. The chain crosses the membrane as a helical span at residues 128 to 150 (LAVFGRGASIMPLAFVLLVSAIK). The Cytoplasmic portion of the chain corresponds to 151–329 (DAYEDFRRHR…SRLETRMNLE (179 aa)). Residues 330 to 351 (IILLSLFLIVLCTIAAATAAVW) traverse the membrane as a helical segment. The Extracellular segment spans residues 352 to 391 (LRTHRDDLDTILFYRRKDYSERPGGKNYKYYGWGWEIFFT). Residues 392 to 409 (FFMAVIVYQIMIPISLYI) form a helical membrane-spanning segment. Residues 410 to 914 (SMELVRIGQA…HGHWNYQRMG (505 aa)) are Cytoplasmic-facing. The active-site 4-aspartylphosphate intermediate is the Asp457. Positions 859 and 863 each coordinate Mg(2+). The chain crosses the membrane as a helical span at residues 915–934 (YMILYNFYRNAVFVLILFWY). The Extracellular segment spans residues 935-948 (VLFTCYTLTTAITE). Residues 949–968 (WSSVLYSVIYTAIPTIIIGI) form a helical membrane-spanning segment. Over 969–998 (LDKDLGRQTLLDHPQLYGVGQRAEGYSTTL) the chain is Cytoplasmic. Residues 999-1020 (FWYTMIDTIWQSAAIFFIPMFA) traverse the membrane as a helical segment. Over 1021–1027 (YWGSTID) the chain is Extracellular. Residues 1028 to 1050 (TSSLGDLWTIAAVVVVNLHLAMD) form a helical membrane-spanning segment. Over 1051–1056 (VIRWNW) the chain is Cytoplasmic. The helical transmembrane segment at 1057 to 1077 (ITHAAIWGSIVAACICVIVID) threads the bilayer. At 1078-1090 (VIPTLPGYWAIFQ) the chain is on the extracellular side. The helical transmembrane segment at 1091–1115 (VGKTWMFWFCLLAIVVTSLLPRFAI) threads the bilayer. Residues 1116 to 1158 (KFLVEYYRPSDVRIAREAEKLGTFRESQPVGVEMNLIQDPPRR) are Cytoplasmic-facing.

Belongs to the cation transport ATPase (P-type) (TC 3.A.3) family. Type IV subfamily. As to expression, expressed in roots, flowers, anthers, leaves, vascular tissues and stems.

Its subcellular location is the endoplasmic reticulum membrane. The protein localises to the cell membrane. It carries out the reaction ATP + H2O + phospholipidSide 1 = ADP + phosphate + phospholipidSide 2.. Its function is as follows. Involved in transport of phospholipids. Contributes to transmembrane flipping of lipids. Has activity with phosphatidylserine and with a much lower efficiency with phosphatidylethanolamine, but not with phosphatidylcholine. The chain is Phospholipid-transporting ATPase 1 from Arabidopsis thaliana (Mouse-ear cress).